We begin with the raw amino-acid sequence, 117 residues long: Movement and RNA silencing protein (117 aa).

The helical transmembrane segment at 15-35 (FLFFGAIFIAITILYILLVLL) threads the bilayer. The interval 83-117 (RDQEPAVIPHVSQVIPSQPNRRDDQGRRGNAGPMF) is disordered.

The protein resides in the host cell membrane. Transports viral genome to neighboring plant cells directly through plasmosdesmata, without any budding. The movement protein allows efficient cell to cell propagation, by bypassing the host cell wall barrier. Begomovirus genome is shuttled out of nucleus by Nuclear shuttle protein (NSP) and the movement protein transports the DNA-NSP complex to cell plasmodesmata and facilitates further movement across the cell wall. Acts as a suppressor of RNA-mediated gene silencing, also known as post-transcriptional gene silencing (PTGS), a mechanism of plant viral defense that limits the accumulation of viral RNAs. The polypeptide is Movement and RNA silencing protein (DNA-M) (Banana bunchy top virus (isolate Autralia) (BBTV)).